The following is a 33-amino-acid chain: MNLELVVQLGSLLLITVAGPLIVFFLFIRQGNL.

Residues 8 to 28 (QLGSLLLITVAGPLIVFFLFI) form a helical membrane-spanning segment.

It belongs to the Psb30/Ycf12 family. PSII is composed of 1 copy each of membrane proteins PsbA, PsbB, PsbC, PsbD, PsbE, PsbF, PsbH, PsbI, PsbJ, PsbK, PsbL, PsbM, PsbT, PsbY, PsbZ, Psb30/Ycf12, peripheral proteins of the oxygen-evolving complex and a large number of cofactors. It forms dimeric complexes.

It localises to the plastid. It is found in the chloroplast thylakoid membrane. Functionally, a core subunit of photosystem II (PSII), probably helps stabilize the reaction center. The protein is Photosystem II reaction center protein Psb30 of Euglena anabaena (Euglenaria anabaena).